The chain runs to 512 residues: Maturase K (512 aa).

The protein belongs to the intron maturase 2 family. MatK subfamily.

The protein localises to the plastid. It is found in the chloroplast. In terms of biological role, usually encoded in the trnK tRNA gene intron. Probably assists in splicing its own and other chloroplast group II introns. The sequence is that of Maturase K from Piper cenocladum (Ant piper).